Consider the following 314-residue polypeptide: Putative S-adenosyl-L-methionine-dependent methyltransferase MAP_4191c (314 aa).

Residues aspartate 138 and 167–168 contribute to the S-adenosyl-L-methionine site; that span reads DL.

It belongs to the UPF0677 family.

Its function is as follows. Exhibits S-adenosyl-L-methionine-dependent methyltransferase activity. The polypeptide is Putative S-adenosyl-L-methionine-dependent methyltransferase MAP_4191c (Mycolicibacterium paratuberculosis (strain ATCC BAA-968 / K-10) (Mycobacterium paratuberculosis)).